Reading from the N-terminus, the 389-residue chain is Odorant receptor 85c (389 aa).

Residues 1–33 lie on the Cytoplasmic side of the membrane; that stretch reads MKFMKYAVFFYTSVGIEPYTIDSRSKKASLWSH. The chain crosses the membrane as a helical span at residues 34 to 54; it reads LLFWANVINLSVIVFGEILYL. Residues 55-66 are Extracellular-facing; the sequence is GVAYSDGKFIDA. The chain crosses the membrane as a helical span at residues 67-87; it reads VTVLSYIGFVIVGMSKMFFIW. Residues 88–130 are Cytoplasmic-facing; the sequence is WKKTDLSDLVKELEHIYPNGKAEEEMYRLDRYLRSCSRISITY. A helical membrane pass occupies residues 131–151; the sequence is ALLYSVLIWTFNLFSIMQFLV. Residues 152–199 are Extracellular-facing; the sequence is YEKLLKIRVVGQTLPYLMYFPWNWHENWTYYVLLFCQNFAGHTSASGQ. N-linked (GlcNAc...) asparagine glycosylation occurs at N178. A helical transmembrane segment spans residues 200–220; sequence ISTDLLLCAVATQVVMHFDYL. At 221–259 the chain is on the cytoplasmic side; sequence ARVVEKQVLDRDWSENSRFLAKTVQYHQRILRLMDVLND. Residues 260-280 form a helical membrane-spanning segment; the sequence is IFGIPLLLNFMVSTFVICFVG. Over 281–290 the chain is Extracellular; sequence FQMTVGVPPD. A helical transmembrane segment spans residues 291–311; that stretch reads IMIKLFLFLFSSLSQVYLICH. Residues 312-359 are Cytoplasmic-facing; that stretch reads YGQLIADASSSLSISAYKQNWQNADIRYRRALVFFIARPQRTTYLKAT. The helical transmembrane segment at 360-380 threads the bilayer; sequence IFMNITRATMTDLLQVSYKFF. Topologically, residues 381–389 are extracellular; sequence ALLRTMYIK.

Belongs to the insect chemoreceptor superfamily. Heteromeric odorant receptor channel (TC 1.A.69) family. Or49a subfamily. Interacts with Orco. Complexes exist early in the endomembrane system in olfactory sensory neurons (OSNs), coupling these complexes to the conserved ciliary trafficking pathway.

It is found in the cell membrane. Functionally, odorant receptor which mediates acceptance or avoidance behavior, depending on its substrates. The odorant receptor repertoire encodes a large collection of odor stimuli that vary widely in identity, intensity, and duration. May form a complex with Orco to form odorant-sensing units, providing sensitive and prolonged odorant signaling and calcium permeability. The chain is Odorant receptor 85c (Or85c) from Drosophila melanogaster (Fruit fly).